The following is a 209-amino-acid chain: CASP-like protein 1B1 (209 aa).

Basic and acidic residues predominate over residues 1–10; it reads MDLERGDKKP. Residues 1–39 form a disordered region; it reads MDLERGDKKPPPPPPPAPRTAAATTTTTTTPACSGKKRP. Topologically, residues 1-49 are cytoplasmic; the sequence is MDLERGDKKPPPPPPPAPRTAAATTTTTTTPACSGKKRPPLRDSLVALQ. The span at 19-32 shows a compositional bias: low complexity; the sequence is RTAAATTTTTTTPA. A helical membrane pass occupies residues 50 to 70; it reads PVLLRAAAALAAAAAAAVMAL. At 71–100 the chain is on the extracellular side; sequence DAQSYTAVVAIVGTRPLTQTFTAKFSDTPA. Residues 101 to 121 traverse the membrane as a helical segment; the sequence is FVYFVIANAIAAAYNLLVLLV. Over 122–134 the chain is Cytoplasmic; sequence RRRRRTTAGLVVR. The helical transmembrane segment at 135-155 threads the bilayer; that stretch reads MLDMVVMALLATGAAAAASMA. Topologically, residues 156-180 are extracellular; that stretch reads ELGRNGNARARWNPVCDRFGSFCRR. The chain crosses the membrane as a helical span at residues 181–201; that stretch reads GGAALAASFVGVALMLALNLL. Residues 202–209 lie on the Cytoplasmic side of the membrane; it reads SAASGAGC.

The protein belongs to the Casparian strip membrane proteins (CASP) family. In terms of assembly, homodimer and heterodimers.

Its subcellular location is the cell membrane. The protein is CASP-like protein 1B1 of Zea mays (Maize).